The chain runs to 143 residues: Granulocyte-macrophage colony-stimulating factor (143 aa).

Positions 1-17 (MWLQNLLLLGTVVCSFS) are cleaved as a signal peptide. Residue threonine 27 is glycosylated (O-linked (GalNAc...) threonine). N-linked (GlcNAc...) asparagine glycans are attached at residues asparagine 44 and asparagine 54. Disulfide bonds link cysteine 70-cysteine 112 and cysteine 104-cysteine 137.

This sequence belongs to the GM-CSF family. Monomer. The signaling GM-CSF receptor complex is a dodecamer of two head-to-head hexamers of two alpha, two beta, and two ligand subunits.

Its subcellular location is the secreted. Functionally, cytokine that stimulates the growth and differentiation of hematopoietic precursor cells from various lineages, including granulocytes, macrophages, eosinophils and erythrocytes. This Bos taurus (Bovine) protein is Granulocyte-macrophage colony-stimulating factor (CSF2).